The sequence spans 164 residues: Arginine repressor (164 aa).

This sequence belongs to the ArgR family.

It localises to the cytoplasm. The protein operates within amino-acid biosynthesis; L-arginine biosynthesis [regulation]. Regulates arginine biosynthesis genes. This Mycobacterium avium (strain 104) protein is Arginine repressor.